The chain runs to 1047 residues: Jouberin (1047 aa).

3 stretches are compositionally biased toward basic and acidic residues: residues 1–17 (MEPE…EKVR), 29–40 (SREKTGIEEKGE), and 77–86 (LLHDDKLASE). Disordered regions lie at residues 1–40 (MEPE…EKGE) and 67–181 (EQLT…SRDS). The segment at 1–284 (MEPETPEKVD…IFNENFPYLL (284 aa)) is interaction with HAP1. Over residues 96–106 (PVPTKPESSPS) the composition is skewed to low complexity. The span at 115-138 (GEQKKEGTPEDSQHMEGICSREQD) shows a compositional bias: basic and acidic residues. Basic residues predominate over residues 149-159 (PKPKKTKKKTK). The span at 172-181 (GVHEITSRDS) shows a compositional bias: basic and acidic residues. 7 WD repeats span residues 457–499 (AGER…FMRE), 502–541 (GHLN…TSTF), 545–585 (PHPS…DAAI), 592–631 (VHKS…NDVQ), 648–687 (FRGV…ARKF), 691–730 (ANYR…QVAM), and 735–776 (PFKS…AQQE). Residue serine 853 is modified to Phosphoserine. An SH3 domain is found at 902 to 962 (DPPPMVVALY…PANHVASETL (61 aa)). Composition is skewed to basic and acidic residues over residues 963 to 987 (YRDS…KPEK) and 1013 to 1040 (HSEK…EPVV). The segment at 963 to 1047 (YRDSPPKVKE…PVVRKVTLIE (85 aa)) is disordered. The residue at position 974 (serine 974) is a Phosphoserine.

Self-associates. Part of the tectonic-like complex (also named B9 complex). Interacts with MKS1. Interacts with NPHP1; probably as heterodimers and/or AHI1(2):NPHP1(2) heterotetramers. Interacts (via SH3 domain) with the dynamin GTPase DNM2. Interacts with HAP1; probably as AHI1(2):HAP1(2) heterotetramers. Interacts with RAB8A. Interacts with CEND1. Interacts with SPATA7. Expressed in the retina (at protein level). Highly expressed in the brain. Highly expressed in the testis. Expressed in the kidney, thymus, heart, lung, spleen. Weakly expressed in the liver, stomach, pancreas, and embryo. Strongly expressed during periods of both cortical and cerebellar development.

It localises to the cytoplasm. Its subcellular location is the cytoskeleton. The protein resides in the cilium basal body. It is found in the microtubule organizing center. The protein localises to the centrosome. It localises to the centriole. Its subcellular location is the cell junction. The protein resides in the adherens junction. In terms of biological role, involved in vesicle trafficking and required for ciliogenesis, formation of primary non-motile cilium, and recruitment of RAB8A to the basal body of primary cilium. Component of the tectonic-like complex, a complex localized at the transition zone of primary cilia and acting as a barrier that prevents diffusion of transmembrane proteins between the cilia and plasma membranes. Involved in neuronal differentiation. As a positive modulator of classical Wnt signaling, may play a crucial role in ciliary signaling during cerebellum embryonic development. The chain is Jouberin (Ahi1) from Mus musculus (Mouse).